A 366-amino-acid polypeptide reads, in one-letter code: tRNA/tmRNA (uracil-C(5))-methyltransferase (366 aa).

5 residues coordinate S-adenosyl-L-methionine: glutamine 190, tyrosine 218, asparagine 223, glutamate 239, and aspartate 299. Residue cysteine 324 is the Nucleophile of the active site. Glutamate 358 acts as the Proton acceptor in catalysis.

It belongs to the class I-like SAM-binding methyltransferase superfamily. RNA M5U methyltransferase family. TrmA subfamily.

It catalyses the reaction uridine(54) in tRNA + S-adenosyl-L-methionine = 5-methyluridine(54) in tRNA + S-adenosyl-L-homocysteine + H(+). It carries out the reaction uridine(341) in tmRNA + S-adenosyl-L-methionine = 5-methyluridine(341) in tmRNA + S-adenosyl-L-homocysteine + H(+). In terms of biological role, dual-specificity methyltransferase that catalyzes the formation of 5-methyluridine at position 54 (m5U54) in all tRNAs, and that of position 341 (m5U341) in tmRNA (transfer-mRNA). This chain is tRNA/tmRNA (uracil-C(5))-methyltransferase, found in Shigella dysenteriae serotype 1 (strain Sd197).